The sequence spans 273 residues: Ribonuclease Z (273 aa).

5 residues coordinate Zn(2+): His61, His63, His146, Asp169, and His233.

This sequence belongs to the RNase Z family. Homodimer. Zn(2+) serves as cofactor.

It carries out the reaction Endonucleolytic cleavage of RNA, removing extra 3' nucleotides from tRNA precursor, generating 3' termini of tRNAs. A 3'-hydroxy group is left at the tRNA terminus and a 5'-phosphoryl group is left at the trailer molecule.. Zinc phosphodiesterase, which displays some tRNA 3'-processing endonuclease activity. Probably involved in tRNA maturation, by removing a 3'-trailer from precursor tRNA. The sequence is that of Ribonuclease Z from Mycobacterium tuberculosis (strain ATCC 25177 / H37Ra).